We begin with the raw amino-acid sequence, 593 residues long: MNKLYIGNLSENVSPPDLESLFKESKIPFTGQFLVKSGYAFVDCPDETWAMKAIDTLSGKVELHGKVIEVEHSVPKRQRSRKLQIRNIPPHLQWEVLDSLLAQYGTVENCEQVNTDSETAVVNVTYANKEHARQGLEKLNGYQLENYSLKVTYIPDEMATPQSPSQQLQQPQQQHPQGRRGFGQRGPARQGSPGAAARPKPQSEVPLRMLVPTQFVGAIIGKEGATIRNITKQTQSKIDIHRKENAGAAEKPITIHSTPEGCSAACKIIMEIMQKEAQDTKFTEEIPLKILAHNNFVGRLIGKEGRNLKKIEQDTDTKITISPLQDLTLYNPERTITVKGSIETCAKAEEEVMKKIRESYENDIAAMNLQAHLIPGLNLNALGLFPPSSSGMPPPSAGVSSPTTSASYPPFGQQPESETVHLFIPALAVGAIIGKQGQHIKQLSRFAGASIKIAPAEGPDAKLRMVIITGPPEAQFKAQGRIYGKLKEENFFGPKEEVKLEAHIKVPSYAAGRVIGKGGKTVNELQNLTSAEVVVPRDQTPDENDQVVVKITGHFYASQLAQRKIQEILAQVRRQQQQQQKTAQSGQPQPRRK.

2 RRM domains span residues asparagine 2–proline 75 and arginine 81–aspartate 156. Positions alanine 159–arginine 208 are disordered. A compositionally biased stretch (low complexity) spans proline 161–proline 176. 2 consecutive KH domains span residues glutamate 204–isoleucine 269 and glutamate 285–valine 352. The segment covering serine 390–proline 402 has biased composition (low complexity). The interval serine 390–glycine 412 is disordered. 2 KH domains span residues serine 417 to isoleucine 482 and lysine 499 to isoleucine 565. The interval glutamine 571–lysine 593 is disordered.

Belongs to the RRM IMP/VICKZ family. In terms of assembly, homodimer and multimer. Associates with microtubules. Interaction with a translocation machinery protein TRAPA of the endoplasmic reticulum. Component of a mRNP complex, at least composed of DAZAP1, IGF2BP3, STAU and VgRBP60. The mRNP complex with DAZAP1, IGF2BP3, STAU and VgRBP60 is only found in the cytoplasm. Interacts with a hnRNP 1 related RNA transport protein VgRBP60 both in the nucleus (in an RNA-independent manner) and the cytoplasm (in an RNA-dependent manner). Found in a B3 activator complex. Expressed in oocytes, kidney and pancreas (at protein level). Expressed in oocytes, kidney and pancreas.

It localises to the nucleus. The protein resides in the cytoplasm. Its subcellular location is the endoplasmic reticulum. Its function is as follows. RNA-binding protein that acts as a regulator of mRNA transport and localization. Binds to the RNA sequence motif 5'-UUCAC-3'. Preferentially binds to N6-methyladenosine (m6A)-containing mRNAs and increases their stability. Mediates the specific association of Vg1 RNA to microtubules. May regulate mRNA translation. Binds specifically to the vegetal localization elements (VLE or VgLE) in the 3'-UTR of Vg1 and VegT mRNAs. Binds to the Vg1 and VegT mRNAs in both the nucleus and the cytoplasm. May regulate mRNA translation. Acts as a transcription regulator. Binds to the 5'-[TA]GGTTACT-3' motif within element 3 of the TFIIIA gene promoter. The polypeptide is Insulin-like growth factor 2 mRNA-binding protein 3-B (igf2bp3-b) (Xenopus laevis (African clawed frog)).